We begin with the raw amino-acid sequence, 666 residues long: ATP-dependent zinc metalloprotease FtsH (666 aa).

The Cytoplasmic segment spans residues 1 to 6 (MKSETG). A helical transmembrane segment spans residues 7-27 (YMGFVVVLVFMVLLALQLATL). At 28-116 (SAPATQIAYS…TRYRGADDDT (89 aa)) the chain is on the periplasmic side. Residues 117–137 (WIGTLASWIVPIAVFALVWNL) traverse the membrane as a helical segment. At 138-666 (MLRRPRGGLQ…ADNADHSVPQ (529 aa)) the chain is on the cytoplasmic side. 210-217 (GAPGTGKT) contributes to the ATP binding site. His-432 lines the Zn(2+) pocket. Glu-433 is an active-site residue. Zn(2+) contacts are provided by His-436 and Asp-509. A disordered region spans residues 612 to 666 (NDEPTPEPGARDPGGDAAKRSGIGAAPAKPPAEVGSAELRDPARKADNADHSVPQ). Basic and acidic residues-rich tracts occupy residues 620-630 (GARDPGGDAAK) and 649-666 (ELRDPARKADNADHSVPQ).

The protein in the central section; belongs to the AAA ATPase family. This sequence in the C-terminal section; belongs to the peptidase M41 family. Homohexamer. Zn(2+) is required as a cofactor.

The protein resides in the cell inner membrane. Acts as a processive, ATP-dependent zinc metallopeptidase for both cytoplasmic and membrane proteins. Plays a role in the quality control of integral membrane proteins. The polypeptide is ATP-dependent zinc metalloprotease FtsH (Burkholderia pseudomallei (strain 1710b)).